A 328-amino-acid polypeptide reads, in one-letter code: Tetraacyldisaccharide 4'-kinase (328 aa).

Residue 55–62 participates in ATP binding; sequence TAGGNGKT.

This sequence belongs to the LpxK family.

It catalyses the reaction a lipid A disaccharide + ATP = a lipid IVA + ADP + H(+). It participates in glycolipid biosynthesis; lipid IV(A) biosynthesis; lipid IV(A) from (3R)-3-hydroxytetradecanoyl-[acyl-carrier-protein] and UDP-N-acetyl-alpha-D-glucosamine: step 6/6. Functionally, transfers the gamma-phosphate of ATP to the 4'-position of a tetraacyldisaccharide 1-phosphate intermediate (termed DS-1-P) to form tetraacyldisaccharide 1,4'-bis-phosphate (lipid IVA). This Shigella boydii serotype 18 (strain CDC 3083-94 / BS512) protein is Tetraacyldisaccharide 4'-kinase.